Here is a 279-residue protein sequence, read N- to C-terminus: Oxygen-dependent coproporphyrinogen-III oxidase (279 aa).

Ser-102 contributes to the substrate binding site. A divalent metal cation contacts are provided by His-106 and His-116. The active-site Proton donor is the His-116. Residue 118 to 120 (NTR) participates in substrate binding. 2 residues coordinate a divalent metal cation: His-149 and His-179. Residues 244–279 (YVEFNLLYDRGTKFGLMTDGNIEAILMSLPPVVKFN) form an important for dimerization region.

Belongs to the aerobic coproporphyrinogen-III oxidase family. As to quaternary structure, homodimer. A divalent metal cation is required as a cofactor.

It localises to the cytoplasm. It carries out the reaction coproporphyrinogen III + O2 + 2 H(+) = protoporphyrinogen IX + 2 CO2 + 2 H2O. It functions in the pathway porphyrin-containing compound metabolism; protoporphyrin-IX biosynthesis; protoporphyrinogen-IX from coproporphyrinogen-III (O2 route): step 1/1. Its function is as follows. Involved in the heme biosynthesis. Catalyzes the aerobic oxidative decarboxylation of propionate groups of rings A and B of coproporphyrinogen-III to yield the vinyl groups in protoporphyrinogen-IX. The chain is Oxygen-dependent coproporphyrinogen-III oxidase from Rickettsia typhi (strain ATCC VR-144 / Wilmington).